We begin with the raw amino-acid sequence, 193 residues long: Serine recombinase gin (193 aa).

Positions 1-134 (MLIGYVRVST…AGLAAARNKG (134 aa)) constitute a Resolvase/invertase-type recombinase catalytic domain. Serine 9 serves as the catalytic O-(5'-phospho-DNA)-serine intermediate. Positions 138-183 (GRPPKLTKAEWEQAGRLLAQGIPRKQVALIYDVALSTLYKKHPAKR) form a DNA-binding region, H-T-H motif.

It belongs to the site-specific recombinase resolvase family. As to quaternary structure, homodimer. During inversion, two dimers associate to form a homotetramer.

The protein localises to the host cytoplasm. Its function is as follows. Performs inversion of a viral 3 kp segment (G-segment) that encodes two alternate pairs of tail fiber proteins thereby modifying the host specificity of the virus. Binds as a dimer to the viral gix sites which are 34-bp palindromic sequences that flank the invertible G-segment. Catalyzes site-specific recombination in the presence of the host factor Fis. Gin dimers bound to each of the gix sites and host factor Fis bound to the enhancer come together to form the synaptic complex. Each Gin monomer introduces a nick and becomes covalently attached to the 5'-phosphate of the DNA, resulting in double-stranded staggered breaks at both recombination sites. A 180 degrees rotation of one of the two Gin dimers followed by religation of the DNA leads to the inversion of the G-segment (G+ or G- orientation). In Escherichia phage Mu (Bacteriophage Mu), this protein is Serine recombinase gin (gin).